The primary structure comprises 253 residues: Proteasome subunit alpha type-3 (253 aa).

A disordered region spans residues 230–253 (ELTEKARKAGDAANKDEDSDNETH). Residues 231 to 253 (LTEKARKAGDAANKDEDSDNETH) show a composition bias toward basic and acidic residues. Residue serine 248 is modified to Phosphoserine.

Belongs to the peptidase T1A family. In terms of assembly, the 26S proteasome consists of a 20S proteasome core and two 19S regulatory subunits. The 20S proteasome core is composed of 28 subunits that are arranged in four stacked rings, resulting in a barrel-shaped structure. The two end rings are each formed by seven alpha subunits, and the two central rings are each formed by seven beta subunits. The catalytic chamber with the active sites is on the inside of the barrel. Interacts with ntc.

Its subcellular location is the cytoplasm. It localises to the nucleus. Its function is as follows. The proteasome is a multicatalytic proteinase complex which is characterized by its ability to cleave peptides with Arg, Phe, Tyr, Leu, and Glu adjacent to the leaving group at neutral or slightly basic pH. The proteasome has an ATP-dependent proteolytic activity. The polypeptide is Proteasome subunit alpha type-3 (Prosalpha7) (Drosophila melanogaster (Fruit fly)).